The sequence spans 136 residues: Small integral membrane protein 23 (136 aa).

At 1–31 (MTIQKTGCRGREAAEVVEQRRRSHHCDDRKQ) the chain is on the cytoplasmic side. Residues 32-52 (TLLALLILVLYLGMGISGSSW) form a helical; Signal-anchor for type II membrane protein membrane-spanning segment. Residues 53–136 (EVSGQTKDCN…DLRPEDPCFT (84 aa)) lie on the Extracellular side of the membrane. The stretch at 92 to 124 (LKINLHGFLEKLEKEVRELEQLVRDLEFWLDAL) forms a coiled coil.

It localises to the membrane. The protein is Small integral membrane protein 23 (Smim23) of Mus musculus (Mouse).